Reading from the N-terminus, the 119-residue chain is Defensin-like protein 260 (119 aa).

The first 24 residues, methionine 1–serine 24, serve as a signal peptide directing secretion. Cystine bridges form between cysteine 44/cysteine 99, cysteine 63/cysteine 79, cysteine 69/cysteine 83, and cysteine 73/cysteine 85.

Belongs to the DEFL family.

Its subcellular location is the secreted. In Arabidopsis thaliana (Mouse-ear cress), this protein is Defensin-like protein 260.